We begin with the raw amino-acid sequence, 267 residues long: MTKTKIMGILNVTPDSFSDGGKFNNVESAINRVKAMIDEGADIIDVGGVSTRPGHEMVSLEEEMNRVLPVVEAIVGFDVKISVDTFRSEVAEACLKLGVDMINDQWAGLYDHRMFQIVAKYDAEIILMHNGNGNRDEPVVEEMLTSLLAQAHQAKIAGIPSNKIWLDPGIGFAKTRNEEAEVMARLDELVATEYPVLLATSRKRFTKEMMGYDTTPVERDEVTAATTAYGIMKGVRAVRVHNVELNAKLAKGIDFLKENENARHNLS.

The region spanning 1 to 251 (MTKTKIMGIL…NVELNAKLAK (251 aa)) is the Pterin-binding domain. A Mg(2+)-binding site is contributed by asparagine 11. Residues threonine 51, aspartate 84, asparagine 103, aspartate 167, lysine 203, and 239–241 (RVH) each bind (7,8-dihydropterin-6-yl)methyl diphosphate.

The protein belongs to the DHPS family. As to quaternary structure, homodimer. Mg(2+) is required as a cofactor.

It carries out the reaction (7,8-dihydropterin-6-yl)methyl diphosphate + 4-aminobenzoate = 7,8-dihydropteroate + diphosphate. It functions in the pathway cofactor biosynthesis; tetrahydrofolate biosynthesis; 7,8-dihydrofolate from 2-amino-4-hydroxy-6-hydroxymethyl-7,8-dihydropteridine diphosphate and 4-aminobenzoate: step 1/2. Catalyzes the condensation of para-aminobenzoate (pABA) with 6-hydroxymethyl-7,8-dihydropterin diphosphate (DHPt-PP) to form 7,8-dihydropteroate (H2Pte), the immediate precursor of folate derivatives. This is Dihydropteroate synthase (folP) from Staphylococcus aureus (strain MW2).